The primary structure comprises 61 residues: Small ribosomal subunit protein uS14 (61 aa).

Zn(2+) contacts are provided by cysteine 24, cysteine 27, cysteine 40, and cysteine 43.

It belongs to the universal ribosomal protein uS14 family. Zinc-binding uS14 subfamily. In terms of assembly, part of the 30S ribosomal subunit. Contacts proteins S3 and S10. Requires Zn(2+) as cofactor.

In terms of biological role, binds 16S rRNA, required for the assembly of 30S particles and may also be responsible for determining the conformation of the 16S rRNA at the A site. This Borrelia duttonii (strain Ly) protein is Small ribosomal subunit protein uS14.